The sequence spans 361 residues: D-alanine--D-alanine ligase (361 aa).

The region spanning 144–350 (KLAAADAGLA…FMELTDRLIR (207 aa)) is the ATP-grasp domain. Position 177–232 (177–232 (VASLSFPMFVKPVSLGSSVGITKVNSESELAEAITHACSLDSKVLIEQAVKGREVE)) interacts with ATP. Residues Asp-303, Glu-317, and Asn-319 each contribute to the Mg(2+) site.

The protein belongs to the D-alanine--D-alanine ligase family. Requires Mg(2+) as cofactor. It depends on Mn(2+) as a cofactor.

It localises to the cytoplasm. It carries out the reaction 2 D-alanine + ATP = D-alanyl-D-alanine + ADP + phosphate + H(+). The protein operates within cell wall biogenesis; peptidoglycan biosynthesis. Functionally, cell wall formation. The protein is D-alanine--D-alanine ligase of Chlorobium luteolum (strain DSM 273 / BCRC 81028 / 2530) (Pelodictyon luteolum).